We begin with the raw amino-acid sequence, 466 residues long: 3-isopropylmalate dehydratase large subunit (466 aa).

Residues Cys-347, Cys-407, and Cys-410 each coordinate [4Fe-4S] cluster.

It belongs to the aconitase/IPM isomerase family. LeuC type 1 subfamily. As to quaternary structure, heterodimer of LeuC and LeuD. [4Fe-4S] cluster is required as a cofactor.

It carries out the reaction (2R,3S)-3-isopropylmalate = (2S)-2-isopropylmalate. Its pathway is amino-acid biosynthesis; L-leucine biosynthesis; L-leucine from 3-methyl-2-oxobutanoate: step 2/4. In terms of biological role, catalyzes the isomerization between 2-isopropylmalate and 3-isopropylmalate, via the formation of 2-isopropylmaleate. The protein is 3-isopropylmalate dehydratase large subunit of Citrobacter koseri (strain ATCC BAA-895 / CDC 4225-83 / SGSC4696).